The primary structure comprises 317 residues: Adenine deaminase (317 aa).

Positions 14, 16, and 194 each coordinate Zn(2+). Glutamate 197 (proton donor) is an active-site residue. Aspartate 275 lines the Zn(2+) pocket. Substrate is bound at residue aspartate 276.

Belongs to the metallo-dependent hydrolases superfamily. Adenosine and AMP deaminases family. Adenine deaminase type 2 subfamily. It depends on Zn(2+) as a cofactor.

It catalyses the reaction adenine + H2O + H(+) = hypoxanthine + NH4(+). Its function is as follows. Catalyzes the hydrolytic deamination of adenine to hypoxanthine. Plays an important role in the purine salvage pathway and in nitrogen catabolism. This is Adenine deaminase from Pseudomonas fluorescens (strain Pf0-1).